Consider the following 232-residue polypeptide: Large ribosomal subunit protein uL1 (232 aa).

Belongs to the universal ribosomal protein uL1 family. As to quaternary structure, part of the 50S ribosomal subunit.

Its function is as follows. Binds directly to 23S rRNA. The L1 stalk is quite mobile in the ribosome, and is involved in E site tRNA release. In terms of biological role, protein L1 is also a translational repressor protein, it controls the translation of the L11 operon by binding to its mRNA. This Burkholderia mallei (strain NCTC 10247) protein is Large ribosomal subunit protein uL1.